A 60-amino-acid polypeptide reads, in one-letter code: Putative mercuric resistance protein (60 aa).

The polypeptide is Putative mercuric resistance protein (Shigella flexneri).